A 346-amino-acid chain; its full sequence is Ribosomal RNA small subunit methyltransferase H (346 aa).

Residues 46–48 (GGY), Asp-63, Phe-90, Asp-113, and Gln-120 contribute to the S-adenosyl-L-methionine site. The segment at 270–346 (GGSAGSRHMP…LPETNELARS (77 aa)) is disordered.

The protein belongs to the methyltransferase superfamily. RsmH family.

It localises to the cytoplasm. It catalyses the reaction cytidine(1402) in 16S rRNA + S-adenosyl-L-methionine = N(4)-methylcytidine(1402) in 16S rRNA + S-adenosyl-L-homocysteine + H(+). In terms of biological role, specifically methylates the N4 position of cytidine in position 1402 (C1402) of 16S rRNA. This is Ribosomal RNA small subunit methyltransferase H from Brucella suis (strain ATCC 23445 / NCTC 10510).